Here is a 512-residue protein sequence, read N- to C-terminus: UDP-N-acetylmuramate--L-alanine ligase (512 aa).

Residue 132-138 coordinates ATP; it reads GAHGKTT.

It belongs to the MurCDEF family.

It localises to the cytoplasm. The enzyme catalyses UDP-N-acetyl-alpha-D-muramate + L-alanine + ATP = UDP-N-acetyl-alpha-D-muramoyl-L-alanine + ADP + phosphate + H(+). It functions in the pathway cell wall biogenesis; peptidoglycan biosynthesis. In terms of biological role, cell wall formation. The chain is UDP-N-acetylmuramate--L-alanine ligase from Bifidobacterium longum (strain NCC 2705).